The sequence spans 218 residues: Glutathione S-transferase Mu 1 (218 aa).

Positions Pro2–Gly88 constitute a GST N-terminal domain. Tyr7 to Trp8 is a glutathione binding site. Thr34 bears the Phosphothreonine mark. Residues Arg43–Trp46, Lys50, Asn59–Leu60, and Gln72–Ser73 contribute to the glutathione site. Residues Thr90–Leu208 enclose the GST C-terminal domain. Tyr116 is a substrate binding site.

The protein belongs to the GST superfamily. Mu family. As to quaternary structure, homodimer.

Its subcellular location is the cytoplasm. It carries out the reaction RX + glutathione = an S-substituted glutathione + a halide anion + H(+). It catalyses the reaction prostaglandin A2 + glutathione = prostaglandin A2-S-(R)-glutathione. The catalysed reaction is prostaglandin J2 + glutathione = prostaglandin J2-S-(R)-glutathione. The enzyme catalyses prostaglandin J2 + glutathione = prostaglandin J2-S-(S)-glutathione. It carries out the reaction prostaglandin A2 + glutathione = prostaglandin A2-S-(S)-glutathione. It catalyses the reaction 11(S)-hydroxy-14(S),15(S)-epoxy-(5Z,8Z,12E)-eicosatrienoate + glutathione = (11S,15S)-dihydroxy-14(R)-S-glutathionyl-(5Z,8Z,12E)-eicosatrienoate. In terms of biological role, conjugation of reduced glutathione to a wide number of exogenous and endogenous hydrophobic electrophiles. Involved in the formation of glutathione conjugates of both prostaglandin A2 (PGA2) and prostaglandin J2 (PGJ2). Participates in the formation of novel hepoxilin regioisomers. The polypeptide is Glutathione S-transferase Mu 1 (GSTM1) (Macaca fascicularis (Crab-eating macaque)).